Consider the following 572-residue polypeptide: Triacylglycerol lipase OBL1 (572 aa).

A helical transmembrane segment spans residues 110–130; sequence GYLVEFFLNLFSLNGNFLGLL. The tract at residues 320-356 is disordered; sequence IPPSESSKSSTSFSDSDAHTGSDLSSDSERPTDTRKK. Residues 323–334 show a composition bias toward low complexity; sequence SESSKSSTSFSD. Positions 346-356 are enriched in basic and acidic residues; that stretch reads DSERPTDTRKK. A GXSXG motif is present at residues 391 to 395; that stretch reads GHSLG. Catalysis depends on serine 393, which acts as the Nucleophile. Active-site charge relay system residues include aspartate 457 and histidine 550.

The protein belongs to the AB hydrolase superfamily. Lipase family. Expressed in pollen grains and pollen tubes.

It is found in the lipid droplet. The protein localises to the membrane. The enzyme catalyses 1,2-di-(9Z-octadecenoyl)-glycerol + (9Z)-octadecenoate + H(+) = 1,2,3-tri-(9Z-octadecenoyl)-glycerol + H2O. It carries out the reaction 1-(9Z-octadecenoyl)-glycerol + H2O = glycerol + (9Z)-octadecenoate + H(+). Acid lipase that can hydrolyze a range of triacylglycerols without a clear preference for acyl-chains. Can also cleave 1,2-diacylglycerol, 1,3-diacylglycerol and 1-monoacylglycerol, but not phosphatidylcholine, phosphatidylethanolamine, or sterol esters. Required for pollen tube growth. Triacylglycerol hydrolysis by OBL1 may provide acyl groups for the synthesis of membrane lipids in growing pollen tubes. The protein is Triacylglycerol lipase OBL1 of Nicotiana tabacum (Common tobacco).